We begin with the raw amino-acid sequence, 351 residues long: Calcium uniporter protein, mitochondrial (351 aa).

A mitochondrion-targeting transit peptide spans 1–50 (MAAAAGRSLLLLLSSRGGGGGGAGGCGALTAGCFPGLGVSRHRQQQHHRT). Over 51–233 (VHQRIASWQN…ISRKAEKRTT (183 aa)) the chain is Mitochondrial matrix. Ser-57 and Ser-92 each carry phosphoserine; by CaMK2. The N-terminal MCU domain stretch occupies residues 75 to 165 (VTVVYQNGLP…LTYHVRPPKR (91 aa)). The residue at position 97 (Cys-97) is an S-glutathionyl cysteine. Residues 192–223 (IEQHQLNKERELIERLEDLKEQLAPLEKVRIE) are a coiled coil. The helical transmembrane segment at 234–255 (LVLWGGLAYMATQFGILARLTW) threads the bilayer. Over 256–262 (WEYSWDI) the chain is Mitochondrial intermembrane. The Selectivity filter motif lies at 260 to 268 (WDIMEPVTY). The chain crosses the membrane as a helical span at residues 263–284 (MEPVTYFITYGSAMAMYAYFVM). Glu-264 serves as a coordination point for Ca(2+). The tract at residues 285–290 (TRQEYV) is juxtamembrane helix. Residues 285-351 (TRQEYVYPEA…LPLRQIGEKD (67 aa)) are Mitochondrial matrix-facing. Residues 311-339 (RFDLEKYNQLKDAIAQAEMDLKRLRDPLQ) adopt a coiled-coil conformation. The residue at position 332 (Lys-332) is an N6-acetyllysine.

This sequence belongs to the MCU (TC 1.A.77) family. As to quaternary structure, homotetramer. Component of the uniplex complex, composed of MCU, EMRE/SMDT1, MICU1 and MICU2 (or MICU3) in a 4:4:1:1 stoichiometry. Interacts with CCDC109B/MCUB; this inhibits channel activity. Interacts with MCUR1. Interactions with MICU1 and MCUR1 are mutually exclusive. Interacts with SLC25A23. In terms of processing, phosphorylation by CaMK2 in heart leads to increased MCU current. The regulation of MCU by CaMK2 is however subject to discussion: another group was unable to reproduce these results. Phosphorylated on tyrosines by PTK2B/PYK2, promoting oligomerization. Post-translationally, glutathionylation at Cys-97 in response to reactive oxygen species (ROS) promotes MCU higher-order assembly, leading to constitutive activation of the MCU channel and mitochondrial calcium overload. Undergoes proteolytic degradation by SPG7.

The protein resides in the mitochondrion inner membrane. It catalyses the reaction Ca(2+)(in) = Ca(2+)(out). With respect to regulation, MCU channel activity is regulated by the heterodimer composed of MICU1 and either MICU2 or MICU3, which act as calcium-sensors. At low calcium levels, MICU1 occludes the pore of the MCU channel, preventing mitochondrial calcium uptake. At higher calcium levels, calcium-binding to MICU1 and MICU2 (or MICU3) induces a conformational change that weakens MCU-MICU1 interactions and moves the MICU1-MICU2 heterodimer away from the pore, allowing calcium permeation through the channel. MCU channel activity is gated by EMRE/SMDT1 via the juxtamembrane helix loop. Inhibited by ruthenium red or its derivative Ru360. In terms of biological role, channel-forming and calcium-conducting subunit of the mitochondrial inner membrane calcium uniporter complex (uniplex), which mediates calcium uptake into the mitochondrial matrix. MCU channel activity is regulated by the calcium-sensor subunits of the uniplex MICU1 and MICU2 (or MICU3). Mitochondrial calcium homeostasis plays key roles in cellular physiology and regulates ATP production, cytoplasmic calcium signals and activation of cell death pathways. Involved in buffering the amplitude of systolic calcium rises in cardiomyocytes. While dispensable for baseline homeostatic cardiac function, acts as a key regulator of short-term mitochondrial calcium loading underlying a 'fight-or-flight' response during acute stress: acts by mediating a rapid increase of mitochondrial calcium in pacemaker cells. Participates in mitochondrial permeability transition during ischemia-reperfusion injury. Mitochondrial calcium uptake in skeletal muscle cells is involved in muscle size in adults. Regulates synaptic vesicle endocytosis kinetics in central nerve terminal. Regulates glucose-dependent insulin secretion in pancreatic beta-cells by regulating mitochondrial calcium uptake. Involved in antigen processing and presentation. The chain is Calcium uniporter protein, mitochondrial from Homo sapiens (Human).